The sequence spans 278 residues: Probable septum site-determining protein MinC (278 aa).

Residues 104 to 167 (RTQQSVDPAP…ASHTPAAPQS (64 aa)) form a disordered region.

This sequence belongs to the MinC family. Interacts with MinD and FtsZ.

Cell division inhibitor that blocks the formation of polar Z ring septums. Rapidly oscillates between the poles of the cell to destabilize FtsZ filaments that have formed before they mature into polar Z rings. Prevents FtsZ polymerization. This is Probable septum site-determining protein MinC from Bordetella avium (strain 197N).